Consider the following 572-residue polypeptide: Outer spore wall assembly protein SHE10 (572 aa).

A signal peptide spans 1–19 (MRAISKLFVFTVLVLGSLQ). Coiled-coil stretches lie at residues 351–372 (SQAN…REVV) and 485–510 (FQER…LREQ). A disordered region spans residues 539–572 (STSWSVPPADARAEPASGSPIQQAASEAAQQPSV). Residues 560–572 (QQAASEAAQQPSV) show a composition bias toward low complexity.

The protein belongs to the SHE10 family. Component of the mitochondria-localized RNase mitochondrial RNA-processing (RNase MRP) composed of one single RNA encoded by the NME1 gene and at least 31 proteins. Absent in the nucleus-localized RNase MRP (NuMRP).

The protein resides in the mitochondrion. Functionally, involved in spore wall assembly. May be a component of the mitochondrial RNase MRP (MtMRP), a ribonucleoprotein endoribonuclease involved in the cleaving RNA transcripts to generate primers for DNA replication in mitochondria. The polypeptide is Outer spore wall assembly protein SHE10 (Eremothecium gossypii (strain ATCC 10895 / CBS 109.51 / FGSC 9923 / NRRL Y-1056) (Yeast)).